The following is a 126-amino-acid chain: uncharacterized protein (126 aa).

The segment at 1–46 is disordered; the sequence is MREEEAAAVVTVPQAGRDGEQPGPPAGLGCAAVRGEPGGGGPQESR.

The protein resides in the cytoplasm. The protein localises to the cytoskeleton. It localises to the cilium basal body. This is an uncharacterized protein from Bos taurus (Bovine).